An 821-amino-acid polypeptide reads, in one-letter code: Maternal DNA replication licensing factor mcm6 (821 aa).

Residues Cys-159 to Cys-186 form a C4-type zinc finger. One can recognise an MCM domain in the interval Leu-347–Val-554. Gly-397–Ser-404 contributes to the ATP binding site. Residues Ser-529–Asp-532 carry the Arginine finger motif.

Belongs to the MCM family. As to quaternary structure, component of the mcm2-7 complex (RLF-M). The complex forms a toroidal hexameric ring with the proposed subunit order mcm2-mcm6-mcm4-mcm7-mcm3-mcm5. The heterodimer of mmcm3/mcm5 interacts with mcm4, mmcm6, mcm7 and weakly with mcm2. Component of the CMG helicase complex, composed of the mcm2-7 complex, the GINS complex and cdc45.

The protein localises to the nucleus. Its subcellular location is the chromosome. It carries out the reaction ATP + H2O = ADP + phosphate + H(+). Its function is as follows. Acts as a component of the mcm2-7 complex (mcm complex) which is the putative replicative helicase essential for 'once per cell cycle' DNA replication initiation and elongation in eukaryotic cells. The active ATPase sites in the mcm2-7 ring are formed through the interaction surfaces of two neighboring subunits such that a critical structure of a conserved arginine finger motif is provided in trans relative to the ATP-binding site of the Walker A box of the adjacent subunit. The six ATPase active sites, however, are likely to contribute differentially to the complex helicase activity. The existence of maternal and zygotic forms of mcm3 and mcm6 suggests that specific forms of mcm2-7 complexes may be used during different stages of development. The polypeptide is Maternal DNA replication licensing factor mcm6 (Xenopus tropicalis (Western clawed frog)).